Reading from the N-terminus, the 173-residue chain is Inner membrane protein YbcI (173 aa).

Residues 1–12 (MPTVITHAAVPL) are Cytoplasmic-facing. The chain crosses the membrane as a helical span at residues 13-35 (CIGLGLGSKVIPPRLLFAGIILA). The Periplasmic segment spans residues 36–54 (MLPDADVLSFKFGVAYGNV). Residues 55–77 (FGHRGFTHSLVFAFVVPLLCVFI) form a helical membrane-spanning segment. At 78–83 (GRRWFR) the chain is on the cytoplasmic side. The chain crosses the membrane as a helical span at residues 84–103 (AGLIRCWLFLTVSLLSHSLL). Topologically, residues 104–147 (DSVTTGGKGVGWLWPWSDERFFAPWQVIKVAPFALSRYTTPYGH) are periplasmic. A helical membrane pass occupies residues 148–170 (QVIISELMWVWLPGMLLMGMLWW). Residues 171–173 (RRR) are Cytoplasmic-facing.

It localises to the cell inner membrane. This is Inner membrane protein YbcI (ybcI) from Escherichia coli (strain K12).